We begin with the raw amino-acid sequence, 337 residues long: o-succinylbenzoate synthase (337 aa).

The Proton donor role is filled by Lys142. Asp170, Glu199, and Asp222 together coordinate Mg(2+). The active-site Proton acceptor is the Lys248.

Belongs to the mandelate racemase/muconate lactonizing enzyme family. MenC type 1 subfamily. Requires a divalent metal cation as cofactor.

It carries out the reaction (1R,6R)-6-hydroxy-2-succinyl-cyclohexa-2,4-diene-1-carboxylate = 2-succinylbenzoate + H2O. It functions in the pathway quinol/quinone metabolism; 1,4-dihydroxy-2-naphthoate biosynthesis; 1,4-dihydroxy-2-naphthoate from chorismate: step 4/7. The protein operates within quinol/quinone metabolism; menaquinone biosynthesis. Functionally, converts 2-succinyl-6-hydroxy-2,4-cyclohexadiene-1-carboxylate (SHCHC) to 2-succinylbenzoate (OSB). The polypeptide is o-succinylbenzoate synthase (Pasteurella multocida (strain Pm70)).